The following is a 236-amino-acid chain: MRKLTLTLSALALALSLNSVADAKVYMPEKVSDGVTVAQLAEQHAIHWISVEQIEESLKGQPMAVGFDIDDTVLFSSPGFYRGKLEYSPNDYSYLKNPEFWEKMNNEWDKFSMPKKSGMELVQMHLKRGDTVYFITGRSKTKTETVTKYVQEGLRIPADKMNPVIFAGDEEGQNNKVSWMRDHKLKIYYGDADADIAAARELNIRGIRVLRASNSSYQPLPKAGQFGEEVVINSEY.

The signal sequence occupies residues 1 to 23 (MRKLTLTLSALALALSLNSVADA). The active-site Nucleophile is Asp68. Asp68 and Asp70 together coordinate Mg(2+). Residue Asp70 is the Proton donor of the active site. Substrate is bound by residues 136–137 (TG) and Lys176. Asp191 serves as a coordination point for Mg(2+).

Belongs to the class B bacterial acid phosphatase family. As to quaternary structure, homotetramer. Requires Mg(2+) as cofactor.

It is found in the periplasm. The catalysed reaction is a phosphate monoester + H2O = an alcohol + phosphate. With respect to regulation, activated by ethanol. Also activated by Co(2+), Zn(2+) and glycerol. Inhibited by EDTA, inorganic phosphate, nucleosides and Ca(2+). Unaffected by fluoride and tartrate. Its function is as follows. Dephosphorylates several organic phosphate monoesters including 5'-AMP, 3'-AMP, pNPP, PDP, 5'-UMP, 3'-UMP, G2P, glucose 6-P and ribose 5-P. No activity toward organic phosphate diesters. Also has a phosphotransferase activity catalyzing the transfer of low-energy phosphate groups from organic phosphate monoesters to free hydroxyl groups of various organic compounds. The sequence is that of Class B acid phosphatase (aphA) from Morganella morganii (Proteus morganii).